The following is a 358-amino-acid chain: Myb family transcription factor IPN2 (358 aa).

Positions 1–20 are disordered; the sequence is MERMFPPKKPSTMNSHDRPM. The HTH myb-type domain maps to 32–92; sequence TDPKPRLRWT…HLQKFRLGKQ (61 aa). The H-T-H motif DNA-binding region spans 63–88; the sequence is PKTIMRVMGVKGLTLYHLKSHLQKFR. Residues 127 to 171 are a coiled coil; it reads NMNEMQIEVQRRLHEQLEVQKHLQLRIEAQGKYMQSILEKAYQTL. The short motif at 139–144 is the LHEQLE element; sequence LHEQLE. Positions 310–358 are disordered; that stretch reads IYDSKPEEKKFDASMKLERPSPRRAPLGERMSPMITTGTMAQGRSSPFG. Positions 311–330 are enriched in basic and acidic residues; sequence YDSKPEEKKFDASMKLERPS. Over residues 343–358 the composition is skewed to polar residues; it reads MITTGTMAQGRSSPFG.

It belongs to the MYB-CC family. Interacts with NSP2. As to expression, expressed in leaves, stems, nodules and roots.

It is found in the nucleus. Its function is as follows. Transcriptional regulator required for Nod-factor-induced gene expression. Transcription activator involved in the induction of NIN and ENOD40 genes, which are required for rhizobial infection and early nodule development. Possesses strong transactivation activity in vitro. Does not seem to contribute to the early steps of the arbuscular mycorrhizal fungus infection and colonization processes in roots. In Lotus japonicus (Lotus corniculatus var. japonicus), this protein is Myb family transcription factor IPN2.